The chain runs to 257 residues: Global transcriptional regulator CodY (257 aa).

Residues 1 to 155 are GAF domain; the sequence is MSLLSKTREL…AATVIGMEIL (155 aa). Valine 22, phenylalanine 24, serine 43, arginine 44, arginine 45, and lysine 47 together coordinate GTP. The L-isoleucine site is built by arginine 61, threonine 96, and phenylalanine 98. GTP-binding residues include glutamate 153 and lysine 158. Positions 203 to 222 form a DNA-binding region, H-T-H motif; it reads ASKVADRVGITRSVIVNALR.

Belongs to the CodY family. As to quaternary structure, homodimer. Homotetramer. May form homodimers under conditions in which energy sources are sufficient (active state) and homotetramers under insufficient nutrient conditions (inactive state).

The protein localises to the cytoplasm. With respect to regulation, activity of CodY is modulated by interaction with two types of effectors: the branched-chain amino acids (BCAAs) leucine, isoleucine and valine, which are signals of the nutritional status of the cell, and GTP, which may signal the energetic status of the cell. DNA-binding global transcriptional regulator which is involved in the adaptive response to starvation and acts by directly or indirectly controlling the expression of numerous genes in response to nutrient availability. During rapid exponential growth, CodY is highly active and represses genes whose products allow adaptation to nutrient depletion. The sequence is that of Global transcriptional regulator CodY from Staphylococcus aureus (strain Mu3 / ATCC 700698).